The chain runs to 541 residues: MLCSLLLCGCLLLITGYAHDDDWIDPTDMLNYDAASGTMRKSQAKYGTSEKKEVNPGLSDAQELSDCLQRLDSLTHKVDDCEKKKMKDYESQSNPVFRRYLNKILIEAGKLGLPDEDRVDVRYDAEILLTRQTLLEIQKFLSGEEWKPGALDDALSDILTNFKSHDAEAWKWQFEDYFGVDPYNVFMVLLCLLCIVALVATELWTYVRWHTQLKRVCIISFLVSLGWNWIYLYKVAFAQHQANVAKMAPLNDVCAKKMDWTENLWEWFRISWTYKDDPCQKYYELLIVNPIWLVPPTKALAVTFTNFVTEPLKYIGKGTGEFIKALMKEIPVLLQIPVLVILALAVLGFCYGAGQSVPMLRHFRGPEREPPRALEPDDRRRQKELDYRFHGGAGDADFSYRGPAGSIEQGPYDKMHVCERDVLRQRQVNMRFPSGNKSPEVLRAFDLPDTEAQEHPEVVPSHKPSIVNTSLKETSELPRESTLAECSQCAKDGSGQVPSTAESSPIVEKAQLKTDSECRPHSTEAAAAAARGTDPVSSPCG.

Positions 1 to 18 are cleaved as a signal peptide; it reads MLCSLLLCGCLLLITGYA. Residues 19 to 184 lie on the Lumenal side of the membrane; it reads HDDDWIDPTD…EDYFGVDPYN (166 aa). A helical transmembrane segment spans residues 185–205; the sequence is VFMVLLCLLCIVALVATELWT. At 206–217 the chain is on the cytoplasmic side; sequence YVRWHTQLKRVC. Residues 218 to 238 form a helical membrane-spanning segment; the sequence is IISFLVSLGWNWIYLYKVAFA. Topologically, residues 239-329 are lumenal; it reads QHQANVAKMA…GEFIKALMKE (91 aa). The helical transmembrane segment at 330–350 threads the bilayer; it reads IPVLLQIPVLVILALAVLGFC. Residues 351 to 541 lie on the Cytoplasmic side of the membrane; that stretch reads YGAGQSVPML…GTDPVSSPCG (191 aa). Residues 362–381 are disordered; the sequence is HFRGPEREPPRALEPDDRRR. A compositionally biased stretch (basic and acidic residues) spans 364 to 381; it reads RGPEREPPRALEPDDRRR. 2 positions are modified to phosphoserine: Ser434 and Ser438. A Phosphothreonine modification is found at Thr482. Phosphoserine is present on Ser504. Positions 511–522 are enriched in basic and acidic residues; sequence QLKTDSECRPHS. The segment at 511-541 is disordered; sequence QLKTDSECRPHSTEAAAAAARGTDPVSSPCG.

The protein belongs to the chloride channel MCLC family. In terms of assembly, homomultimers. Interacts with mitochondrial protein PIGBOS1 (via C-terminus); the interaction occurs at the mitochondria-associated endoplasmic reticulum (ER) membrane, a zone of contact between the ER and mitochondrial membranes, but does not appear to play a role in ER-mitochondria tethering and is not affected by ER stress. Interacts with CALR. As to expression, expressed in testis (spermatocytes), liver and lung (at protein level). Expressed in spleen, liver, testis, kidney, heart, brain and lung.

The protein localises to the endoplasmic reticulum membrane. It carries out the reaction chloride(in) = chloride(out). The enzyme catalyses bromide(in) = bromide(out). It catalyses the reaction nitrate(in) = nitrate(out). The catalysed reaction is fluoride(in) = fluoride(out). Functionally, anion-selective channel with Ca(2+)-dependent and voltage-independent gating. Permeable to small monovalent anions with selectivity for bromide &gt; chloride &gt; nitrate &gt; fluoride. Operates in the endoplasmic reticulum (ER) membrane where it mediates chloride efflux to compensate for the loss of positive charges from the ER lumen upon Ca(2+) release. Contributes to the maintenance of ER Ca(2+) pools and activation of unfolded protein response to prevent accumulation of misfolded proteins in the ER lumen. Particularly involved in ER homeostasis mechanisms underlying motor neurons and retinal photoreceptors survival. The protein is Chloride channel CLIC-like protein 1 of Rattus norvegicus (Rat).